A 317-amino-acid chain; its full sequence is MQILLANPRGFCAGVDRAISIVERALEIYGAPIYVRHEVVHNRYVVNDLRERGAIFIEEISEVPDNAILIFSAHGVSQAIRQEARSRNLTMLFDATCPLVTKVHMEVARASRKGKEAILIGHAGHPEVEGTMGQYNNPEGGMYLVESPDDVWKLKVKDEDNLCFMTQTTLSVDDTSEVIDALNKRFPKIIGPRKDDICYATTNRQEAARELAERADVVFVVGSKNSSNSNRLAELAQRAGKPSYLIDSAEDIDEIWVSHANIVGVTAGASAPDILVQQVLARLKAFGAEEVIELSGREENIVFEVPKELRLDYKVVE.

Cys-12 is a binding site for [4Fe-4S] cluster. (2E)-4-hydroxy-3-methylbut-2-enyl diphosphate contacts are provided by His-41 and His-74. 2 residues coordinate dimethylallyl diphosphate: His-41 and His-74. Residues His-41 and His-74 each coordinate isopentenyl diphosphate. Cys-97 contributes to the [4Fe-4S] cluster binding site. His-125 serves as a coordination point for (2E)-4-hydroxy-3-methylbut-2-enyl diphosphate. His-125 serves as a coordination point for dimethylallyl diphosphate. His-125 provides a ligand contact to isopentenyl diphosphate. The active-site Proton donor is Glu-127. Thr-168 lines the (2E)-4-hydroxy-3-methylbut-2-enyl diphosphate pocket. Cys-198 is a binding site for [4Fe-4S] cluster. Residues Ser-226, Ser-227, Asn-228, and Ser-270 each contribute to the (2E)-4-hydroxy-3-methylbut-2-enyl diphosphate site. 4 residues coordinate dimethylallyl diphosphate: Ser-226, Ser-227, Asn-228, and Ser-270. 4 residues coordinate isopentenyl diphosphate: Ser-226, Ser-227, Asn-228, and Ser-270.

This sequence belongs to the IspH family. Homodimer. It depends on [4Fe-4S] cluster as a cofactor.

The catalysed reaction is isopentenyl diphosphate + 2 oxidized [2Fe-2S]-[ferredoxin] + H2O = (2E)-4-hydroxy-3-methylbut-2-enyl diphosphate + 2 reduced [2Fe-2S]-[ferredoxin] + 2 H(+). It catalyses the reaction dimethylallyl diphosphate + 2 oxidized [2Fe-2S]-[ferredoxin] + H2O = (2E)-4-hydroxy-3-methylbut-2-enyl diphosphate + 2 reduced [2Fe-2S]-[ferredoxin] + 2 H(+). It participates in isoprenoid biosynthesis; dimethylallyl diphosphate biosynthesis; dimethylallyl diphosphate from (2E)-4-hydroxy-3-methylbutenyl diphosphate: step 1/1. The protein operates within isoprenoid biosynthesis; isopentenyl diphosphate biosynthesis via DXP pathway; isopentenyl diphosphate from 1-deoxy-D-xylulose 5-phosphate: step 6/6. Catalyzes the conversion of 1-hydroxy-2-methyl-2-(E)-butenyl 4-diphosphate (HMBPP) into a mixture of isopentenyl diphosphate (IPP) and dimethylallyl diphosphate (DMAPP). Acts in the terminal step of the DOXP/MEP pathway for isoprenoid precursor biosynthesis. The sequence is that of 4-hydroxy-3-methylbut-2-enyl diphosphate reductase from Proteus mirabilis (strain HI4320).